Reading from the N-terminus, the 406-residue chain is Dual-specificity RNA methyltransferase RlmN (406 aa).

E119 functions as the Proton acceptor in the catalytic mechanism. The region spanning 125-370 (DKGRGTLCVS…AMVRRTRGDD (246 aa)) is the Radical SAM core domain. C132 and C375 form a disulfide bridge. [4Fe-4S] cluster is bound by residues C139, C143, and C146. S-adenosyl-L-methionine is bound by residues 192–193 (GE), S224, 246–248 (SLH), and N332. C375 (S-methylcysteine intermediate) is an active-site residue.

This sequence belongs to the radical SAM superfamily. RlmN family. It depends on [4Fe-4S] cluster as a cofactor.

It is found in the cytoplasm. It catalyses the reaction adenosine(2503) in 23S rRNA + 2 reduced [2Fe-2S]-[ferredoxin] + 2 S-adenosyl-L-methionine = 2-methyladenosine(2503) in 23S rRNA + 5'-deoxyadenosine + L-methionine + 2 oxidized [2Fe-2S]-[ferredoxin] + S-adenosyl-L-homocysteine. The enzyme catalyses adenosine(37) in tRNA + 2 reduced [2Fe-2S]-[ferredoxin] + 2 S-adenosyl-L-methionine = 2-methyladenosine(37) in tRNA + 5'-deoxyadenosine + L-methionine + 2 oxidized [2Fe-2S]-[ferredoxin] + S-adenosyl-L-homocysteine. Specifically methylates position 2 of adenine 2503 in 23S rRNA and position 2 of adenine 37 in tRNAs. m2A2503 modification seems to play a crucial role in the proofreading step occurring at the peptidyl transferase center and thus would serve to optimize ribosomal fidelity. The sequence is that of Dual-specificity RNA methyltransferase RlmN from Xylella fastidiosa (strain M12).